We begin with the raw amino-acid sequence, 215 residues long: Nascent polypeptide-associated complex subunit alpha (215 aa).

Positions 1 to 82 (MPGEATETVP…EKKARKAMSK (82 aa)) are disordered. Residues 9–28 (VPVTEQEMQQPQAETGSGTE) are compositionally biased toward polar residues. The span at 29–42 (SDSDESVPDLEEGD) shows a compositional bias: acidic residues. A compositionally biased stretch (low complexity) spans 44 to 57 (AQTQTQQAQLAAAA). Residues 70-135 (SRSEKKARKA…AKIEDLSQQA (66 aa)) enclose the NAC-A/B domain. S166 carries the phosphoserine modification. The region spanning 176-213 (VEVKDIELVMSQANVSRAKAVRALKNNNNDIVNAIMEL) is the UBA domain.

It belongs to the NAC-alpha family.

Functionally, may promote appropriate targeting of ribosome-nascent polypeptide complexes. The polypeptide is Nascent polypeptide-associated complex subunit alpha (naca) (Danio rerio (Zebrafish)).